Here is a 114-residue protein sequence, read N- to C-terminus: Large ribosomal subunit protein uL22 (114 aa).

This sequence belongs to the universal ribosomal protein uL22 family. In terms of assembly, part of the 50S ribosomal subunit.

This protein binds specifically to 23S rRNA; its binding is stimulated by other ribosomal proteins, e.g. L4, L17, and L20. It is important during the early stages of 50S assembly. It makes multiple contacts with different domains of the 23S rRNA in the assembled 50S subunit and ribosome. Functionally, the globular domain of the protein is located near the polypeptide exit tunnel on the outside of the subunit, while an extended beta-hairpin is found that lines the wall of the exit tunnel in the center of the 70S ribosome. In Methylacidiphilum infernorum (isolate V4) (Methylokorus infernorum (strain V4)), this protein is Large ribosomal subunit protein uL22.